The sequence spans 147 residues: Myosin regulatory light chain (147 aa).

Position 1 is an N-acetylthreonine (Thr1). 3 consecutive EF-hand domains span residues 2 to 37 (ASADQIQECFQIFDKDNDGKVSIEELGSALRSLGKN), 73 to 108 (EQSKEMLDAFRALDKEGNGTIQEAELRQLLLNLGDA), and 109 to 144 (LTSSEVEELMKEVSVSGDGAINYESFVDMLVTGYPL). Residues Asp15, Asp17, Asp19, Lys21, Glu26, Asp86, Asn90, Thr92, and Glu97 each coordinate Ca(2+).

The polypeptide is Myosin regulatory light chain (Physarum polycephalum (Slime mold)).